We begin with the raw amino-acid sequence, 349 residues long: Acyl-CoA:acyl-CoA alkyltransferase (349 aa).

The Proton acceptor role is filled by glutamate 97. The active-site Acyl-thioester intermediate is the cysteine 123.

This sequence belongs to the thiolase-like superfamily. OleA family.

It carries out the reaction a 1,2-saturated acyl-CoA + an acyl-CoA + H2O = an (R)-2-alkyl-3-oxoalkanoate + 2 CoA + H(+). In terms of biological role, involved in olefin biosynthesis. Catalyzes a non-decarboxylative head-to-head Claisen condensation of two acyl-CoA molecules, generating an (R)-2-alkyl-3-oxoalkanoate. The S.oneidensis oleABCD genes produce 3,6,9,12,15,19,22,25,28-hentriacontanonaene, which may aid the cells in adapting to a sudden drop in temperature. This Shewanella oneidensis (strain ATCC 700550 / JCM 31522 / CIP 106686 / LMG 19005 / NCIMB 14063 / MR-1) protein is Acyl-CoA:acyl-CoA alkyltransferase.